The primary structure comprises 423 residues: GPI mannosyltransferase 2 (423 aa).

9 helical membrane-spanning segments follow: residues L7–G27, V102–Y122, I128–T148, A151–I171, T191–F211, F228–V248, L298–V318, P333–F353, and Y400–Y420.

It belongs to the PIGV family.

The protein resides in the endoplasmic reticulum membrane. It participates in glycolipid biosynthesis; glycosylphosphatidylinositol-anchor biosynthesis. Its function is as follows. Mannosyltransferase involved in glycosylphosphatidylinositol-anchor biosynthesis. Transfers the second mannose to the glycosylphosphatidylinositol during GPI precursor assembly. The chain is GPI mannosyltransferase 2 (GPI18) from Cryptococcus neoformans var. neoformans serotype D (strain JEC21 / ATCC MYA-565) (Filobasidiella neoformans).